The sequence spans 309 residues: Probable manganese-dependent inorganic pyrophosphatase (309 aa).

The Mn(2+) site is built by histidine 9, aspartate 13, aspartate 15, aspartate 75, histidine 97, and aspartate 149.

It belongs to the PPase class C family. It depends on Mn(2+) as a cofactor.

The protein resides in the cytoplasm. It carries out the reaction diphosphate + H2O = 2 phosphate + H(+). This is Probable manganese-dependent inorganic pyrophosphatase from Bacillus cereus (strain 03BB102).